A 392-amino-acid polypeptide reads, in one-letter code: Phospho-N-acetylmuramoyl-pentapeptide-transferase (392 aa).

10 helical membrane passes run 28–48 (RALM…PYVI), 74–94 (TPTM…LMWF), 100–120 (FVWI…VDDW), 137–157 (YFWQ…SISE), 193–213 (VSYP…IVGA), 225–245 (GLAI…AYVT), 262–282 (SGEL…FLWF), 289–309 (VFMG…IAVI), 314–334 (IVFF…MAQV), and 369–389 (QVVV…LSTL).

Belongs to the glycosyltransferase 4 family. MraY subfamily. Mg(2+) serves as cofactor.

It localises to the cell inner membrane. The catalysed reaction is UDP-N-acetyl-alpha-D-muramoyl-L-alanyl-gamma-D-glutamyl-meso-2,6-diaminopimeloyl-D-alanyl-D-alanine + di-trans,octa-cis-undecaprenyl phosphate = di-trans,octa-cis-undecaprenyl diphospho-N-acetyl-alpha-D-muramoyl-L-alanyl-D-glutamyl-meso-2,6-diaminopimeloyl-D-alanyl-D-alanine + UMP. Its pathway is cell wall biogenesis; peptidoglycan biosynthesis. Functionally, catalyzes the initial step of the lipid cycle reactions in the biosynthesis of the cell wall peptidoglycan: transfers peptidoglycan precursor phospho-MurNAc-pentapeptide from UDP-MurNAc-pentapeptide onto the lipid carrier undecaprenyl phosphate, yielding undecaprenyl-pyrophosphoryl-MurNAc-pentapeptide, known as lipid I. This chain is Phospho-N-acetylmuramoyl-pentapeptide-transferase, found in Variovorax paradoxus (strain S110).